The following is a 335-amino-acid chain: Beta-hexosaminidase (335 aa).

Substrate-binding positions include D60, R68, R133, and 163-164 (KH). H176 acts as the Proton donor/acceptor in catalysis. D247 serves as the catalytic Nucleophile.

Belongs to the glycosyl hydrolase 3 family. NagZ subfamily.

It is found in the cytoplasm. The catalysed reaction is Hydrolysis of terminal non-reducing N-acetyl-D-hexosamine residues in N-acetyl-beta-D-hexosaminides.. Its pathway is cell wall biogenesis; peptidoglycan recycling. Plays a role in peptidoglycan recycling by cleaving the terminal beta-1,4-linked N-acetylglucosamine (GlcNAc) from peptide-linked peptidoglycan fragments, giving rise to free GlcNAc, anhydro-N-acetylmuramic acid and anhydro-N-acetylmuramic acid-linked peptides. The polypeptide is Beta-hexosaminidase (Stenotrophomonas maltophilia (strain K279a)).